Consider the following 266-residue polypeptide: Flavin-dependent thymidylate synthase (266 aa).

The 212-residue stretch at 11 to 222 (GFIRLVDYMG…PLACASFERH (212 aa)) folds into the ThyX domain. FAD-binding positions include S57, 80-82 (RHR), and E88. Residues 77–80 (QWIR), 88–92 (EISGR), and R161 each bind dUMP. The ThyX motif motif lies at 80–90 (RHRTARLNEIS). Residues 177 to 179 (DLH) and H183 each bind FAD. Position 188 (R188) interacts with dUMP. The active-site Involved in ionization of N3 of dUMP, leading to its activation is the R188.

This sequence belongs to the thymidylate synthase ThyX family. As to quaternary structure, homotetramer. It depends on FAD as a cofactor.

The enzyme catalyses dUMP + (6R)-5,10-methylene-5,6,7,8-tetrahydrofolate + NADPH + H(+) = dTMP + (6S)-5,6,7,8-tetrahydrofolate + NADP(+). It participates in pyrimidine metabolism; dTTP biosynthesis. Functionally, catalyzes the reductive methylation of 2'-deoxyuridine-5'-monophosphate (dUMP) to 2'-deoxythymidine-5'-monophosphate (dTMP) while utilizing 5,10-methylenetetrahydrofolate (mTHF) as the methyl donor, and NADPH and FADH(2) as the reductant. The sequence is that of Flavin-dependent thymidylate synthase from Treponema denticola (strain ATCC 35405 / DSM 14222 / CIP 103919 / JCM 8153 / KCTC 15104).